The chain runs to 1035 residues: Electrogenic sodium bicarbonate cotransporter 1 (1035 aa).

Residues 1–421 (MSSEKECLEN…FASDFYDALS (421 aa)) lie on the Cytoplasmic side of the membrane. Over residues 192-217 (SRLFSTPDNGSPTMTHRNLTSTSLND) the composition is skewed to polar residues. 2 disordered regions span residues 192–222 (SRLFSTPDNGSPTMTHRNLTSTSLNDVSDKP) and 348–389 (IEPP…GDSE). A compositionally biased stretch (basic and acidic residues) spans 376-389 (APHDDGGGGHGDSE). A helical transmembrane segment spans residues 422-446 (IQSLSAILFIYLGTVTNAITFGGLL). Topologically, residues 447–456 (GDATENMQGV) are extracellular. A helical membrane pass occupies residues 457 to 475 (LESFLGTAVSGAVFCLFGG). Residue Gln476 is a topological domain, cytoplasmic. A discontinuously helical transmembrane segment spans residues 477–497 (PLTILSSTGPVLVFERLLFNF). Over 498–505 (SKDNDFDY) the chain is Extracellular. Residues 506–526 (LEFRLWIGLWSAFQCLILVAT) traverse the membrane as a helical segment. Residues 527 to 540 (DASFLVKYFTRFTE) lie on the Cytoplasmic side of the membrane. A helical transmembrane segment spans residues 541–564 (EGFSSLISFIFIYDAFKKMIKLAD). Residues 565–648 (YYPINSHFKV…GSNCKYVPDI (84 aa)) are Extracellular-facing. N-linked (GlcNAc...) asparagine glycans are attached at residues Asn591, Asn596, Asn609, and Asn617. A helical membrane pass occupies residues 649–666 (TLMSFILFLGTYTCSMAL). Residues 667 to 681 (KKFKTSRYFPTTARK) are Cytoplasmic-facing. A helical membrane pass occupies residues 682-701 (LISDFAIILSILIFCGLDAL). The Extracellular portion of the chain corresponds to 702 to 735 (LGVDTPKLIVPSEFKPTSPNRGWFVPPFGGNPWW). A helical membrane pass occupies residues 736–763 (VYLAAAIPALLVTILIFMDQQITGVIVN). Over 764-775 (RKEHKLKKGAGY) the chain is Cytoplasmic. The chain crosses the membrane as a helical span at residues 776–792 (HLDLFWVAILMVVCSFM). Ala793 is a topological domain (extracellular). A discontinuously helical transmembrane segment spans residues 794–811 (LPWYVAATVISIAHIDSL). At 812-833 (KMETETSAPGEQPKFLGVREQR) the chain is on the cytoplasmic side. The chain crosses the membrane as a helical span at residues 834 to 850 (VTGTVVFLLTGLSVFMA). The Extracellular segment spans residues 851–857 (PILKFIP). The chain crosses the membrane as a helical span at residues 858–874 (MPVLYGVFLYMGVASLN). Residues 875–916 (GVQFMDRLKLLLMPPKYQPDFIYLRHVPLRRVHLFTFLQVVC) lie on the Cytoplasmic side of the membrane. Positions 917 to 942 (LAMLWILKSTVAAIIFPVMILALVAV) form an intramembrane region, discontinuously helical. Residues 943–1035 (RKAMDYFFSQ…PTFLERHTSC (93 aa)) are Cytoplasmic-facing. Positions 968–1035 (KKKEDEKKKK…PTFLERHTSC (68 aa)) are disordered. The span at 1007 to 1035 (IMEKEPFLIDSKPSDRENSPTFLERHTSC) shows a compositional bias: basic and acidic residues.

The protein belongs to the anion exchanger (TC 2.A.31) family. In terms of assembly, homodimer. As to expression, expressed in kidney and to a lower extent in bladder, brain, intestine, large intestine and eye.

The protein localises to the basolateral cell membrane. The protein resides in the cell membrane. The catalysed reaction is 2 hydrogencarbonate(out) + Na(+)(out) = 2 hydrogencarbonate(in) + Na(+)(in). It carries out the reaction 3 hydrogencarbonate(out) + Na(+)(out) = 3 hydrogencarbonate(in) + Na(+)(in). Its function is as follows. Electrogenic sodium/bicarbonate cotransporter with a Na(+):HCO3(-) stoichiometry varying from 1:2 to 1:3. May regulate bicarbonate influx/efflux at the basolateral membrane of cells and regulate intracellular pH. The chain is Electrogenic sodium bicarbonate cotransporter 1 (SLC4A4) from Ambystoma tigrinum (Eastern tiger salamander).